Here is a 469-residue protein sequence, read N- to C-terminus: uncharacterized protein (469 aa).

The next 3 membrane-spanning stretches (helical) occupy residues 42 to 62 (DVIIFLLLFFVAFNVSSAYVI), 179 to 199 (IVLPPGAVILSPQGTLLVTPS), and 249 to 269 (NLKYLLIIAIFGTAIFGGLFV).

Its subcellular location is the cell membrane. This is an uncharacterized protein from Methanocaldococcus jannaschii (strain ATCC 43067 / DSM 2661 / JAL-1 / JCM 10045 / NBRC 100440) (Methanococcus jannaschii).